The chain runs to 261 residues: Prostatic glandular kallikrein-6 (261 aa).

The signal sequence occupies residues 1–18; sequence MWLLILFLILSLGWNDAA. A propeptide spans 19-24 (activation peptide); that stretch reads PPGQSR. The Peptidase S1 domain occupies 25–258; it reads IIGGFNCEKN…FTSWMKKVMK (234 aa). Intrachain disulfides connect Cys31–Cys173, Cys50–Cys66, Cys152–Cys219, Cys184–Cys198, and Cys209–Cys234. The Charge relay system role is filled by His65. The N-linked (GlcNAc...) asparagine glycan is linked to Asn108. Asp120 functions as the Charge relay system in the catalytic mechanism. Ser213 functions as the Charge relay system in the catalytic mechanism.

It belongs to the peptidase S1 family. Kallikrein subfamily.

The enzyme catalyses Preferential cleavage of Arg-|-Xaa bonds in small molecule substrates. Highly selective action to release kallidin (lysyl-bradykinin) from kininogen involves hydrolysis of Met-|-Xaa or Leu-|-Xaa.. In terms of biological role, glandular kallikreins cleave Met-Lys and Arg-Ser bonds in kininogen to release Lys-bradykinin. This is Prostatic glandular kallikrein-6 (Klk6) from Rattus norvegicus (Rat).